The following is a 512-amino-acid chain: ETS translocation variant 3 (512 aa).

The segment at residues 35–116 is a DNA-binding region (ETS); the sequence is IQLWHFILEL…KGKRFTYKFN (82 aa). Positions 138–196 are disordered; sequence QSAPPVPTASSRFHFPPLDTHSPTSDVQPGRFSASSLTASGQESSNGTDRKAELSXLED. Phosphoserine occurs at positions 139, 159, and 315. Over residues 158–184 the composition is skewed to polar residues; it reads HSPTSDVQPGRFSASSLTASGQESSNG. The interval 341–512 is disordered; sequence QFSIKLQPPP…QGLATAAADA (172 aa). A compositionally biased stretch (basic and acidic residues) spans 380–406; it reads IKVEPASEKDAESLRQSAREKEEHTXE. A Glycyl lysine isopeptide (Lys-Gly) (interchain with G-Cter in SUMO2) cross-link involves residue K381. N6-acetyllysine; alternate is present on K388. K388 participates in a covalent cross-link: Glycyl lysine isopeptide (Lys-Gly) (interchain with G-Cter in SUMO2); alternate. Over residues 443–452 the composition is skewed to acidic residues; it reads EPLEVTEDIE. 2 stretches are compositionally biased toward basic and acidic residues: residues 453–468 and 479–491; these read DRPG…KEDA and RWND…ELSK.

Belongs to the ETS family.

Its subcellular location is the nucleus. In terms of biological role, transcriptional repressor that contribute to growth arrest during terminal macrophage differentiation by repressing target genes involved in Ras-dependent proliferation. Represses MMP1 promoter activity. This is ETS translocation variant 3 (ETV3) from Ateles geoffroyi (Black-handed spider monkey).